Here is a 170-residue protein sequence, read N- to C-terminus: Cyclic pyranopterin monophosphate synthase (170 aa).

The disordered stretch occupies residues 1-25; the sequence is MADPSTLTHPDPEGGVRMMDASQKS. Residues 78–80 and 116–117 contribute to the substrate site; these read LCH and ME. Residue aspartate 131 is part of the active site.

Belongs to the MoaC family. In terms of assembly, homohexamer; trimer of dimers.

It catalyses the reaction (8S)-3',8-cyclo-7,8-dihydroguanosine 5'-triphosphate = cyclic pyranopterin phosphate + diphosphate. Its pathway is cofactor biosynthesis; molybdopterin biosynthesis. Catalyzes the conversion of (8S)-3',8-cyclo-7,8-dihydroguanosine 5'-triphosphate to cyclic pyranopterin monophosphate (cPMP). The chain is Cyclic pyranopterin monophosphate synthase from Salinibacter ruber (strain DSM 13855 / M31).